We begin with the raw amino-acid sequence, 577 residues long: Mitochondrial-processing peptidase subunit alpha (577 aa).

A mitochondrion-targeting transit peptide spans 1–35 (MLNRFRPARLVAQSSRCLPLTRARAGPLPVNNART). The interval 259 to 301 (SDAPGLSRTGSETSVDSLVSESSEASSESSSSSSDSSESSGGL) is disordered. Low complexity predominate over residues 269–301 (SETSVDSLVSESSEASSESSSSSSDSSESSGGL).

This sequence belongs to the peptidase M16 family. Heterodimer of mpp (alpha) and pep (beta) subunits, forming the mitochondrial processing protease (MPP) in which mpp is involved in substrate recognition and binding and pep is the catalytic subunit.

The protein localises to the mitochondrion matrix. Its function is as follows. Substrate recognition and binding subunit of the essential mitochondrial processing protease (MPP), which cleaves the mitochondrial sequence off newly imported precursors proteins. This chain is Mitochondrial-processing peptidase subunit alpha, found in Neurospora crassa (strain ATCC 24698 / 74-OR23-1A / CBS 708.71 / DSM 1257 / FGSC 987).